The chain runs to 541 residues: Protein panoramix (541 aa).

An interaction with Piwi region spans residues 1–169 (MEAPMKLEVK…TLVPDEQQSF (169 aa)). Disordered regions lie at residues 52–75 (SDPEDGNLVHHSATPTSDEHLQPS) and 198–281 (TAEN…TELD). Residues 194-216 (MLEMTAENRKVKHKKKKHKKERS) are a coiled coil. Residues 203–220 (KVKHKKKKHKKERSHRSN) are compositionally biased toward basic residues. Basic and acidic residues-rich tracts occupy residues 241–251 (DDKNQFDCDYR) and 269–279 (SSKERKLRDTE). The tract at residues 315-343 (LSKADKRSLAVARAELVLEQIQQKANKEE) is nxf2-interacting region (NIR). The stretch at 323–343 (LAVARAELVLEQIQQKANKEE) forms a coiled coil. Residues 387–446 (TPGTRIDLSKWGLETVPEATKRLLRLLGIDVARLKELQSTVKPSQRILKLKKEQLEQGLA) are necessary for interaction with nxf2 and protein stability.

In the ovaries, part of a complex composed of at least Panx, nxf2, piwi and Nxt1. The complex is knowns as Panx-induced cotranscriptional silencing (PICTS) complex, Panx-nxf2-dependent TAP/p15 silencing (Pandas complex), SFiNX (silencing factor interacting nuclear export variant) or piwi-Panx-nxf2-p15 (PPNP) complex. Interacts (via NIR region) with nxf2 (via TAP-C domain); the interaction is direct. Expressed in female gonads (at protein level).

The protein localises to the nucleus. Its function is as follows. Acts via the piwi-interacting RNA (piRNA) pathway which mediates the repression of transposable elements during meiosis by forming complexes composed of piRNAs and piwi proteins and governs the methylation and subsequent repression of transposons. Required for transcriptional silencing of transposons targeted by piwi and confers its effects by interacting with nascent RNA transcripts. Likely to be recruited to nascent transcripts cotranscriptionally by piwi and to recruit additional factors involved in transcriptional silencing. In the ovaries, forms a complex with nxf2, piwi and Nxt1 which acts as effectors of cotranscriptional transposon silencing. The interaction with nxf2 stabilizes the nuclear protein complex. This is Protein panoramix from Drosophila melanogaster (Fruit fly).